The primary structure comprises 427 residues: Ectoine TRAP transporter large permease protein TeaC (427 aa).

12 helical membrane-spanning segments follow: residues 13–35, 49–69, 79–99, 103–123, 147–167, 172–192, 216–236, 237–257, 273–293, 320–340, 356–376, and 400–420; these read LLLG…FMMF, MAGI…AADI, LINM…VSTA, TLFG…GSPL, IAFL…SGTS, FIAG…YCVI, LALW…GGIF, SPTE…FVVF, GLIT…SWII, ICVA…ILVL, VLVG…PPFG, and FIFM…IALF.

Belongs to the TRAP transporter large permease family. The complex comprises the extracytoplasmic solute receptor protein TeaA, and the two transmembrane proteins TeaB and TeaC.

Its subcellular location is the cell inner membrane. Its function is as follows. Part of the tripartite ATP-independent periplasmic (TRAP) transport system TeaABC involved in the uptake of ectoine and hydroxyectoine in response to osmotic upshock. Probably functions as a recovery system for synthesized ectoine that leaks out of the cell. In Halomonas elongata (strain ATCC 33173 / DSM 2581 / NBRC 15536 / NCIMB 2198 / 1H9), this protein is Ectoine TRAP transporter large permease protein TeaC (teaC).